A 438-amino-acid polypeptide reads, in one-letter code: Putative permease HI_0125 (438 aa).

Transmembrane regions (helical) follow at residues 21–41, 51–71, 73–93, 97–117, 137–157, 167–187, 195–215, 238–258, 296–316, 326–346, 347–367, 386–406, and 418–438; these read IIAG…VPNM, SVFI…GLWA, APMA…SLVI, VAIP…TLIS, AGIG…GLVV, LGDF…LIIG, GGIL…DPNV, FMGA…MTAV, LFSG…AAGT, AIVV…AFLV, PGYA…SNVS, FIVL…ALVI, and NVGT…GWAI. Position 315–322 (315–322) interacts with ATP; the sequence is GTAAGGKT.

It belongs to the nucleobase:cation symporter-2 (NCS2) (TC 2.A.40) family. Azg-like subfamily.

It is found in the cell membrane. This is Putative permease HI_0125 from Haemophilus influenzae (strain ATCC 51907 / DSM 11121 / KW20 / Rd).